The sequence spans 680 residues: WD repeat-containing protein 48 homolog (680 aa).

WD repeat units lie at residues 26–65 (QHRN…SEKY), 71–110 (HHND…CMST), 113–152 (THRD…ALTA), 164–203 (GSKD…RSMK), 206–245 (GHTE…CVQT), 248–287 (VHKE…NKTL), 290–329 (EEQA…RCTM), and 350–389 (KGGA…KKEQ). The tract at residues 592 to 616 (ETTPSGGNANNSLQNSQSDANSEGS) is disordered.

This sequence belongs to the WD repeat WDR48 family. Catalytic component of the Usp12-46 deubiquitylase complex consisting of Usp12-46, Wdr20 and Uaf1; regulatory subunit that, together wtih Wdr20, stabilizes Usp12-46. The Usp12-46 deubiquitylase complex associates with arr/arrow; the interaction leads to deubiquitination and stabilization of arr/arrow.

Functionally, regulatory component of the Usp12-46 deubiquitylase complex. activates deubiquitination by increasing the catalytic turnover without increasing the affinity of deubiquitinating enzymes for the substrate. The complex deubiquitylates the wg/wingless-signaling receptor arr/arrow, which stabilizes the receptor and increases its concentration at the cell surface; this enhances the sensitivity of cells to wg/wingless-signal stimulation. This increases the amplitude and spatial range of the signaling response to the wg/wingless morphogen gradient, facilitating the precise concentration-dependent regulation of its target genes. Together with Wdr20 and Usp12-46 required for wg/wingless-mediated signaling in the wing imaginal disc and for wg/wingless-dependent regulation of intestinal stem cell proliferation. The polypeptide is WD repeat-containing protein 48 homolog (Drosophila erecta (Fruit fly)).